Reading from the N-terminus, the 316-residue chain is tRNA-cytidine(32) 2-sulfurtransferase (316 aa).

Residues 45 to 50 carry the PP-loop motif motif; it reads SGGKDS. Residues Cys120, Cys123, and Cys211 each contribute to the [4Fe-4S] cluster site.

Belongs to the TtcA family. Homodimer. The cofactor is Mg(2+). [4Fe-4S] cluster is required as a cofactor.

Its subcellular location is the cytoplasm. The catalysed reaction is cytidine(32) in tRNA + S-sulfanyl-L-cysteinyl-[cysteine desulfurase] + AH2 + ATP = 2-thiocytidine(32) in tRNA + L-cysteinyl-[cysteine desulfurase] + A + AMP + diphosphate + H(+). Its pathway is tRNA modification. Catalyzes the ATP-dependent 2-thiolation of cytidine in position 32 of tRNA, to form 2-thiocytidine (s(2)C32). The sulfur atoms are provided by the cysteine/cysteine desulfurase (IscS) system. The protein is tRNA-cytidine(32) 2-sulfurtransferase of Shewanella sediminis (strain HAW-EB3).